The following is a 345-amino-acid chain: Tropomodulin-4 (345 aa).

A disordered region spans residues 42 to 63 (NMLLPAGLRQRDQTKKSPTGPL).

It belongs to the tropomodulin family. Binds to the N-terminus of tropomyosin and to actin. Highly expressed in skeletal muscle.

It is found in the cytoplasm. The protein resides in the cytoskeleton. Blocks the elongation and depolymerization of the actin filaments at the pointed end. The Tmod/TM complex contributes to the formation of the short actin protofilament, which in turn defines the geometry of the membrane skeleton. The protein is Tropomodulin-4 (TMOD4) of Homo sapiens (Human).